Consider the following 122-residue polypeptide: Ribonuclease P protein component (122 aa).

It belongs to the RnpA family. Consists of a catalytic RNA component (M1 or rnpB) and a protein subunit.

It catalyses the reaction Endonucleolytic cleavage of RNA, removing 5'-extranucleotides from tRNA precursor.. In terms of biological role, RNaseP catalyzes the removal of the 5'-leader sequence from pre-tRNA to produce the mature 5'-terminus. It can also cleave other RNA substrates such as 4.5S RNA. The protein component plays an auxiliary but essential role in vivo by binding to the 5'-leader sequence and broadening the substrate specificity of the ribozyme. This Lactobacillus helveticus (strain DPC 4571) protein is Ribonuclease P protein component.